The following is a 263-amino-acid chain: uncharacterized protein (263 aa).

An ATP-binding site is contributed by 31 to 38 (GPTGSGKT).

This sequence belongs to the CbbQ/NirQ/NorQ/GpvN family.

This is an uncharacterized protein from Staphylococcus haemolyticus (strain JCSC1435).